The sequence spans 530 residues: Chaperone Ric-8A (530 aa).

Residue S435 is modified to Phosphoserine. Phosphothreonine occurs at positions 440 and 442. Residues S501, S522, S523, and S527 each carry the phosphoserine modification.

The protein belongs to the synembryn family. As to quaternary structure, interacts with GDP-bound G alpha proteins GNAI1, GNAO1 and GNAQ, and with GNA13 with lower affinity. Does not interact with G-alpha proteins when they are in complex with subunits beta and gamma. Interacts (via C-terminus) with RGS14; the interaction stimulates the dissociation of the complex between RGS14 and the active GTP-bound form of GNAI1. Interacts with NCS1; interaction is favored in the absence of Ca(2+) and myristoylation of NCS1 is not required. Phosphorylated at Ser-435 and Thr-440 by CK2, stabilizing its interface with G alpha proteins.

Its subcellular location is the cytoplasm. It is found in the cell cortex. In terms of biological role, chaperone that specifically binds and folds nascent G alpha proteins prior to G protein heterotrimer formation, promoting their stability and activity: folds GNAI1, GNAO1, GNA13 and GNAQ. Does not fold G(s) G-alpha proteins GNAS nor GNAL. Also acts as a guanine nucleotide exchange factor (GEF) for G alpha proteins by stimulating exchange of bound GDP for free GTP. Involved in regulation of microtubule pulling forces during mitotic movement of chromosomes by stimulating G(i)-alpha protein (GNAI1), possibly leading to release G(i)-alpha-GTP and NuMA proteins from the NuMA-GPSM2-G(i)-alpha-GDP complex. Also acts as an activator for G(q)-alpha (GNAQ) protein by enhancing the G(q)-coupled receptor-mediated ERK activation. This is Chaperone Ric-8A (RIC8A) from Bos taurus (Bovine).